Consider the following 459-residue polypeptide: Methionine aminopeptidase 2-1 (459 aa).

Residues M1–G12 show a composition bias toward basic and acidic residues. Residues M1 to K79 are disordered. The span at G43–E54 shows a compositional bias: acidic residues. Residues K67–K79 show a composition bias toward basic residues. H210 serves as a coordination point for substrate. A divalent metal cation is bound by residues D231, D242, and H311. H319 is a binding site for substrate. The a divalent metal cation site is built by E344 and E440.

It belongs to the peptidase M24A family. Methionine aminopeptidase eukaryotic type 2 subfamily. It depends on Co(2+) as a cofactor. The cofactor is Zn(2+). Requires Mn(2+) as cofactor. Fe(2+) serves as cofactor.

It localises to the cytoplasm. The enzyme catalyses Release of N-terminal amino acids, preferentially methionine, from peptides and arylamides.. In terms of biological role, cotranslationally removes the N-terminal methionine from nascent proteins. The N-terminal methionine is often cleaved when the second residue in the primary sequence is small and uncharged (Met-Ala-, Cys, Gly, Pro, Ser, Thr, or Val). In Pyrenophora tritici-repentis (strain Pt-1C-BFP) (Wheat tan spot fungus), this protein is Methionine aminopeptidase 2-1.